Reading from the N-terminus, the 387-residue chain is Protein RecA (387 aa).

An ATP-binding site is contributed by 80–87; sequence GPESSGKT. The interval 348–387 is disordered; sequence LDDSEVAETEEETTASKTKAKAKKEEKXVETEEIELELQD. Acidic residues-rich tracts occupy residues 349-360 and 378-387; these read DDSEVAETEEET and TEEIELELQD.

The protein belongs to the RecA family.

The protein resides in the cytoplasm. In terms of biological role, can catalyze the hydrolysis of ATP in the presence of single-stranded DNA, the ATP-dependent uptake of single-stranded DNA by duplex DNA, and the ATP-dependent hybridization of homologous single-stranded DNAs. It interacts with LexA causing its activation and leading to its autocatalytic cleavage. The sequence is that of Protein RecA from Lactococcus lactis subsp. cremoris (Streptococcus cremoris).